The primary structure comprises 200 residues: Small ribosomal subunit protein mS26 (200 aa).

The N-terminal 27 residues, 1–27, are a transit peptide targeting the mitochondrion; it reads MLRALNRLAARPETRPPTPLLLPVRGR. Residues 1–44 are disordered; sequence MLRALNRLAARPETRPPTPLLLPVRGRKTRHDPPAKSKVGRVQT. K159 is subject to N6-acetyllysine.

This sequence belongs to the mitochondrion-specific ribosomal protein mS26 family. In terms of assembly, component of the mitochondrial ribosome small subunit (28S) which comprises a 12S rRNA and about 30 distinct proteins.

It is found in the mitochondrion. The chain is Small ribosomal subunit protein mS26 (Mrps26) from Mus musculus (Mouse).